The primary structure comprises 334 residues: B1 bradykinin receptor (334 aa).

Residues 1–21 (MASQASLKLQPSNQSQQAPPN) are disordered. At 1–41 (MASQASLKLQPSNQSQQAPPNITSCEGAPEAWDLLCRVLPG) the chain is on the extracellular side. Positions 10 to 21 (QPSNQSQQAPPN) are enriched in low complexity. Residues Asn-13 and Asn-21 are each glycosylated (N-linked (GlcNAc...) asparagine). The helical transmembrane segment at 42-62 (FVITVCFFGLLGNLLVLSFFL) threads the bilayer. Residues 63 to 80 (LPWRRWWQQRRQRLTIAE) lie on the Cytoplasmic side of the membrane. The chain crosses the membrane as a helical span at residues 81 to 101 (IYLANLAASDLVFVLGLPFWA). Residues 102–118 (ENVGNRFNWPFGSDLCR) are Extracellular-facing. The cysteines at positions 117 and 196 are disulfide-linked. The helical transmembrane segment at 119-139 (VVSGVIKANLFISIFLVVAIS) threads the bilayer. The Cytoplasmic segment spans residues 140-161 (QDRYRLLVYPMTSWGNRRRRQA). Residues 162 to 182 (QVTCLLIWVAGGLLSTPTFLL) traverse the membrane as a helical segment. The Extracellular portion of the chain corresponds to 183-214 (RSVKVVPDLNISACILLFPHEAWHFVRMVELN). Residue Asn-192 is glycosylated (N-linked (GlcNAc...) asparagine). Residues 215–235 (VLGFLLPLAAILYFNFHILAS) form a helical membrane-spanning segment. Over 236 to 258 (LRGQKEASRTRCGGPKDSKTMGL) the chain is Cytoplasmic. The helical transmembrane segment at 259–279 (ILTLVASFLVCWAPYHFFAFL) threads the bilayer. The Extracellular segment spans residues 280-302 (DFLVQVRVIQDCFWKELTDLGLQ). The helical transmembrane segment at 303–323 (LANFFAFVNSCLNPLIYVFAG) threads the bilayer. The Cytoplasmic portion of the chain corresponds to 324–334 (RLFKTRVLGTL).

Belongs to the G-protein coupled receptor 1 family. Bradykinin receptor subfamily. BDKRB1 sub-subfamily. As to expression, expressed in heart, liver and lung.

The protein resides in the cell membrane. Functionally, this is a receptor for bradykinin. Could be a factor in chronic pain and inflammation. In Mus musculus (Mouse), this protein is B1 bradykinin receptor (Bdkrb1).